We begin with the raw amino-acid sequence, 268 residues long: Serine/arginine-rich splicing factor SR30 (268 aa).

RRM domains follow at residues 7-82 (RTIY…IAHG) and 109-187 (YRVL…EYES). The span at 186 to 199 (ESRSVSRSPDDSKS) shows a compositional bias: basic and acidic residues. Positions 186–268 (ESRSVSRSPD…NSPVSPVISG (83 aa)) are disordered. Phosphoserine occurs at positions 193, 210, 212, 214, 219, 221, 227, 236, 246, 256, and 260. A compositionally biased stretch (low complexity) spans 207–247 (RGPSCSYSSKSRSVSPARSISPRSRPLSRSRSLYSSVSRSQ). The segment covering 257 to 268 (RSNSPVSPVISG) has biased composition (low complexity).

It belongs to the splicing factor SR family. SR subfamily. As to quaternary structure, component of the spliceosome. Interacts with SNRNP35, CYP59 and CYP63. Post-translationally, phosphorylated. As to expression, ubiquitous.

It is found in the nucleus speckle. The protein resides in the nucleus. It localises to the nucleoplasm. The protein localises to the cytoplasm. Its function is as follows. Regulatory splicing factor that modulates alternative splicing and gene expression in specific cell types. Autoregulates its own expression. Probably involved in intron recognition and spliceosome assembly. The polypeptide is Serine/arginine-rich splicing factor SR30 (SR30) (Arabidopsis thaliana (Mouse-ear cress)).